The chain runs to 247 residues: Ribosomal RNA small subunit methyltransferase G (247 aa).

S-adenosyl-L-methionine is bound by residues G84, F89, A136 to E137, and R155.

The protein belongs to the methyltransferase superfamily. RNA methyltransferase RsmG family.

The protein resides in the cytoplasm. Its function is as follows. Specifically methylates the N7 position of a guanine in 16S rRNA. The polypeptide is Ribosomal RNA small subunit methyltransferase G (Prochlorococcus marinus (strain MIT 9313)).